We begin with the raw amino-acid sequence, 265 residues long: Silencing boundary-establishment protein FUB1-like protein (265 aa).

Residues 194 to 265 (HPENRSRNEQ…MPPGSSDMFM (72 aa)) are disordered.

This sequence belongs to the proteasome inhibitor PI31 family. In terms of assembly, interacts with the 20S proteasome.

Its subcellular location is the cytoplasm. The protein resides in the nucleus. Its function is as follows. May play a role in the establishment of transcriptional silencing boundaries, preventing the propagation of heterochromatic silencing. In Schizosaccharomyces pombe (strain 972 / ATCC 24843) (Fission yeast), this protein is Silencing boundary-establishment protein FUB1-like protein.